We begin with the raw amino-acid sequence, 574 residues long: FAD-linked oxidoreductase sor8 (574 aa).

A signal peptide spans 1–27 (MYAPPFVRAFGIAVLAVLPSFSSPATA). Residues Asn-58, Asn-112, Asn-136, Asn-266, Asn-312, Asn-363, and Asn-384 are each glycosylated (N-linked (GlcNAc...) asparagine). The FAD-binding PCMH-type domain maps to 126–305 (VIGTYVQYAV…YSMTVKAHAN (180 aa)).

It belongs to the oxygen-dependent FAD-linked oxidoreductase family. FAD is required as a cofactor.

The protein operates within secondary metabolite biosynthesis. In terms of biological role, FAD-linked oxidoreductase; part of the SOR gene cluster that mediates the biosynthesis of sorbicillinoids, a diverse group of yellow secondary metabolites that restrict growth of competing pathogenic fungi but not of bacteria. Sorbicillinoids biosynthesis requires the action of two PKSs. The SOR cluster is required for the production of trichodimerol and dihydrotrichotetronin, with sor2 being sufficient for production of trichodimerol, but not dihydrotrichotetronin in the light. Sor1 iteratively combines three acetyl units and the growing chain is modified by the ketoacyl reductase subunit, and optional by the enoyl reductase subunit in the second cycle. The polyketide is then handed over to the PKS sor2, which adds three more acetyl units, and two methyl groups. Sor2 releases an aldehyde, which undergoes spontaneous cyclization resulting in the formation of sorbicillin or 2',3'-dihydrosorbicillin. The monooxygenase sor5 oxidizes sorbicillin and 2',3'-dihydrosorbicillin to 2',3'-dihydrosorbicillinol and sorbicillinol, respectively. The oxidoreductase sor8 further converts sorbicillinol into oxosorbicillinol. Sorbicillinol is the building block for the other sorbicillinoids such as disorbicillinol, bisvertinolon, dihydrobisvertinolone, and dihydrotrichotetronine. The polypeptide is FAD-linked oxidoreductase sor8 (Hypocrea jecorina (strain QM6a) (Trichoderma reesei)).